Here is a 476-residue protein sequence, read N- to C-terminus: Aspartyl/glutamyl-tRNA(Asn/Gln) amidotransferase subunit B (476 aa).

It belongs to the GatB/GatE family. GatB subfamily. Heterotrimer of A, B and C subunits.

The catalysed reaction is L-glutamyl-tRNA(Gln) + L-glutamine + ATP + H2O = L-glutaminyl-tRNA(Gln) + L-glutamate + ADP + phosphate + H(+). The enzyme catalyses L-aspartyl-tRNA(Asn) + L-glutamine + ATP + H2O = L-asparaginyl-tRNA(Asn) + L-glutamate + ADP + phosphate + 2 H(+). In terms of biological role, allows the formation of correctly charged Asn-tRNA(Asn) or Gln-tRNA(Gln) through the transamidation of misacylated Asp-tRNA(Asn) or Glu-tRNA(Gln) in organisms which lack either or both of asparaginyl-tRNA or glutaminyl-tRNA synthetases. The reaction takes place in the presence of glutamine and ATP through an activated phospho-Asp-tRNA(Asn) or phospho-Glu-tRNA(Gln). This chain is Aspartyl/glutamyl-tRNA(Asn/Gln) amidotransferase subunit B, found in Nitratidesulfovibrio vulgaris (strain ATCC 29579 / DSM 644 / CCUG 34227 / NCIMB 8303 / VKM B-1760 / Hildenborough) (Desulfovibrio vulgaris).